Here is a 78-residue protein sequence, read N- to C-terminus: Conotoxin Bu2 (78 aa).

An N-terminal signal peptide occupies residues 1–19 (MKLTCVLIIAVLFLTAITA). Residues 20–41 (DDSRDKQVYRAVGLIDKMRRIR) constitute a propeptide that is removed on maturation. Cystine bridges form between cysteine 46-cysteine 59, cysteine 53-cysteine 64, and cysteine 58-cysteine 73.

It belongs to the conotoxin O1 superfamily. In terms of tissue distribution, expressed by the venom duct.

The protein resides in the secreted. The polypeptide is Conotoxin Bu2 (Conus bullatus (Bubble cone)).